Here is a 56-residue protein sequence, read N- to C-terminus: Large ribosomal subunit protein bL32 (56 aa).

A disordered region spans residues 1–56 (MAVQQNRKTRSKRGMRRSHDALSAPTLSQDKETGTTHRRHHVAPDGFYRGRKVVDV). Basic residues predominate over residues 7–16 (RKTRSKRGMR).

This sequence belongs to the bacterial ribosomal protein bL32 family.

The chain is Large ribosomal subunit protein bL32 from Chromohalobacter salexigens (strain ATCC BAA-138 / DSM 3043 / CIP 106854 / NCIMB 13768 / 1H11).